We begin with the raw amino-acid sequence, 239 residues long: Isopentenyl-diphosphate Delta-isomerase (239 aa).

K43 is a binding site for substrate. Mg(2+) contacts are provided by H47 and H58. Residues 56–210 (LLHRAFSIFL…KVKVTPWFRL (155 aa)) form the Nudix hydrolase domain. Residues R77 and K81 each coordinate substrate. C93 is a catalytic residue. S94 is a binding site for substrate. Residues E156 and E158 each coordinate Mg(2+). E158 is an active-site residue.

Belongs to the IPP isomerase type 1 family. Requires Mg(2+) as cofactor.

It catalyses the reaction isopentenyl diphosphate = dimethylallyl diphosphate. Its pathway is isoprenoid biosynthesis; dimethylallyl diphosphate biosynthesis; dimethylallyl diphosphate from isopentenyl diphosphate: step 1/1. In terms of biological role, catalyzes the 1,3-allylic rearrangement of the homoallylic substrate isopentenyl (IPP) to its highly electrophilic allylic isomer, dimethylallyl diphosphate (DMAPP). This is Isopentenyl-diphosphate Delta-isomerase (ipi) from Dictyostelium discoideum (Social amoeba).